A 110-amino-acid chain; its full sequence is Iron-sulfur cluster assembly protein CyaY (110 aa).

Belongs to the frataxin family.

Its function is as follows. Involved in iron-sulfur (Fe-S) cluster assembly. May act as a regulator of Fe-S biogenesis. The polypeptide is Iron-sulfur cluster assembly protein CyaY (Pseudomonas putida (strain W619)).